The primary structure comprises 282 residues: Digeranylgeranylglyceryl phosphate synthase (282 aa).

9 helical membrane passes run 15–35 (VIGAALGAIMGFLVSSQWYLE), 36–56 (LKGILLSALVVGLIAAGGYVI), 81–100 (VNKAKALSIALFIIGIALSI), 104–121 (IYALVIALVTAIGLIYYA), 131–151 (GNLLVATTTALSIFYGGLAFF), 159–179 (IIIPTLYAFFLTLIREIVKGI), 201–221 (KSWRIAKILLVLLLIISPLPF), 222–242 (FIGFNLIYLILLILVFIPFTI), and 260–280 (YLKISAISGIIAFLLGSLPFF).

The protein belongs to the UbiA prenyltransferase family. DGGGP synthase subfamily. It depends on Mg(2+) as a cofactor. Ca(2+) is required as a cofactor.

It localises to the cell membrane. It catalyses the reaction sn-3-O-(geranylgeranyl)glycerol 1-phosphate + (2E,6E,10E)-geranylgeranyl diphosphate = 2,3-bis-O-(geranylgeranyl)-sn-glycerol 1-phosphate + diphosphate. The protein operates within membrane lipid metabolism; glycerophospholipid metabolism. With respect to regulation, inhibited by EDTA in vitro. Functionally, prenyltransferase that catalyzes the transfer of the geranylgeranyl moiety of geranylgeranyl diphosphate (GGPP) to the C2 hydroxyl of (S)-3-O-geranylgeranylglyceryl phosphate (GGGP). This reaction is the second ether-bond-formation step in the biosynthesis of archaeal membrane lipids. Cannot use other prenyl donors, i.e. farnesyl diphosphate (FPP) and phytyl diphosphate. Moreover, 4-hydroxybenzoate, 1,4-dihydroxy 2-naphthoate, homogentisate, and alpha-glycerophosphate do not function as prenyl acceptor substrates. In Saccharolobus solfataricus (strain ATCC 35092 / DSM 1617 / JCM 11322 / P2) (Sulfolobus solfataricus), this protein is Digeranylgeranylglyceryl phosphate synthase (ubiA-2).